A 1168-amino-acid polypeptide reads, in one-letter code: Transcription-repair-coupling factor (1168 aa).

The 162-residue stretch at 633–794 folds into the Helicase ATP-binding domain; the sequence is DMQKSRPMDR…MLGVRDLSVI (162 aa). An ATP-binding site is contributed by 646–653; it reads GDVGYGKT. Residues 747–750 carry the DEEQ box motif; sequence DEEQ. Residues 808-969 form the Helicase C-terminal domain; the sequence is VLEQNMSFIK…GFKIAMRDLN (162 aa).

The protein in the N-terminal section; belongs to the UvrB family. This sequence in the C-terminal section; belongs to the helicase family. RecG subfamily.

The protein localises to the cytoplasm. Functionally, couples transcription and DNA repair by recognizing RNA polymerase (RNAP) stalled at DNA lesions. Mediates ATP-dependent release of RNAP and its truncated transcript from the DNA, and recruitment of nucleotide excision repair machinery to the damaged site. The polypeptide is Transcription-repair-coupling factor (Staphylococcus aureus (strain bovine RF122 / ET3-1)).